A 422-amino-acid polypeptide reads, in one-letter code: Glycerol-3-phosphate dehydrogenase [NAD(+)] 2 (422 aa).

Residues 69–74 (GSGNWG), Phe157, Lys180, and Ala213 contribute to the NAD(+) site. Lys180 contacts substrate. The active-site Proton acceptor is Lys273. NAD(+)-binding residues include Arg338 and Gln367. Position 338–339 (338–339 (RN)) interacts with substrate.

It belongs to the NAD-dependent glycerol-3-phosphate dehydrogenase family.

The catalysed reaction is sn-glycerol 3-phosphate + NAD(+) = dihydroxyacetone phosphate + NADH + H(+). The polypeptide is Glycerol-3-phosphate dehydrogenase [NAD(+)] 2 (GPD2) (Candida glabrata (strain ATCC 2001 / BCRC 20586 / JCM 3761 / NBRC 0622 / NRRL Y-65 / CBS 138) (Yeast)).